We begin with the raw amino-acid sequence, 368 residues long: DNA replication and repair protein RecF (368 aa).

ATP is bound at residue 30-37 (GKNGTGKT).

This sequence belongs to the RecF family.

The protein resides in the cytoplasm. The RecF protein is involved in DNA metabolism; it is required for DNA replication and normal SOS inducibility. RecF binds preferentially to single-stranded, linear DNA. It also seems to bind ATP. This Chloroherpeton thalassium (strain ATCC 35110 / GB-78) protein is DNA replication and repair protein RecF.